The primary structure comprises 446 residues: MNAQEANFDGLVGPTHNYAGLSFGNVASLNNEKSVANPKAAAKQGLRKMKQLADLGFAQGVLPPQERPSLRLLRELGFSGKDADVIAKAAKQAPELLAAASSASAMWTANAATVSPSADTADGRVHFTPANLCSKLHRAIEHEATRRTLSTLFADRARFAVHDALTGTPALGDEGAANHTRFCAEYGKPGVEFFVYGRSEYRRGPEPKRYPARQTFEASRAVAQRHGLAEEATVYAQQDPDVIDAGVFHNDVISVGNRDTLFTHERAFVNKQAIYDTLTAALDARGARLNVIEVPDAAVSVNDAVTSYLFNSQLLSRADGSQVLVVPQECRENANVAAYLDHLAAGNGPIRDVLVFDLRESMKNGGGPACLRLRVVLTDAERAAVTSNVWIDDTLFTVLDAWIEKHYRDRLAPDDLADPALLVESRTALDELTQILRVGSLYDFQR.

Residues alanine 19–serine 28, asparagine 110, and histidine 137–arginine 138 contribute to the substrate site. The active site involves glutamate 174. Arginine 213 contacts substrate. Histidine 249 is an active-site residue. The substrate site is built by aspartate 251 and asparagine 364. The active-site Nucleophile is the cysteine 370.

It belongs to the succinylarginine dihydrolase family. As to quaternary structure, homodimer.

The enzyme catalyses N(2)-succinyl-L-arginine + 2 H2O + 2 H(+) = N(2)-succinyl-L-ornithine + 2 NH4(+) + CO2. Its pathway is amino-acid degradation; L-arginine degradation via AST pathway; L-glutamate and succinate from L-arginine: step 2/5. Catalyzes the hydrolysis of N(2)-succinylarginine into N(2)-succinylornithine, ammonia and CO(2). This is N-succinylarginine dihydrolase from Burkholderia multivorans (strain ATCC 17616 / 249).